Consider the following 481-residue polypeptide: Acyl-CoA ligase cnsG (481 aa).

The short motif at 3-11 (SPQLPPSMK) is the PTS2-type peroxisomal targeting signal element. Residues 124–132 (KSGTTGNPK), 263–268 (NGYGMT), Asp353, and Arg368 contribute to the ATP site. Thr268 serves as a coordination point for substrate. Residues 376–378 (GGL) and 446–448 (AIF) each bind CoA. Lys466 serves as a coordination point for ATP.

Belongs to the ATP-dependent AMP-binding enzyme family.

It participates in alkaloid biosynthesis. Acyl-CoA ligase; part of the gene cluster that mediates the biosynthesis of communesins, a prominent class of indole alkaloids with great potential as pharmaceuticals. Communesins are biosynthesized by the coupling of tryptamine and aurantioclavine, two building blocks derived from L-tryptophan. The L-tryptophan decarboxylase cnsB converts L-tryptophan to tryptamine, whereas the tryptophan dimethylallyltransferase cnsF converts L-tryptophan to 4-dimethylallyl tryptophan which is further transformed to aurantioclavine by the aurantioclavine synthase cnsA, probably aided by the catalase cnsD. The cytochrome P450 monooxygenase cnsC catalyzes the heterodimeric coupling between the two different indole moieties, tryptamine and aurantioclavine, to construct vicinal quaternary stereocenters and yield the heptacyclic communesin scaffold. The O-methyltransferase cnsE then methylates the communesin scaffold to produce communesin K, the simplest characterized communesin that contains the heptacyclic core. The dioxygenase cnsJ converts communesin K into communesin I. Acylation to introduce the hexadienyl group at position N16 of communesin I by the acyltransferase cnsK leads to the production of communesin B. The hexadienyl group is produced by the highly reducing polyketide synthase cnsI, before being hydrolytically removed from cnsI by the serine hydrolase cnsH, converted into hexadienyl-CoA by the CoA ligase cnsG, and then transferred to communesin I by cnsK. Surprisingly, cnsK may also be a promiscuous acyltransferase that can tolerate a range of acyl groups, including acetyl-, propionyl-, and butyryl-CoA, which lead to communesins A, G and H respectively. The roles of the alpha-ketoglutarate-dependent dioxygenases cnsM and cnsP have still to be determined. This is Acyl-CoA ligase cnsG from Penicillium expansum (Blue mold rot fungus).